The chain runs to 415 residues: MQQDYLSQQRFSALPLHPIVRGALAKKGFDFCTPIQALSLPISLNGRDVAGQAQTGTGKTMAFLTATFHHLLTHQDPNLKYPHPRALILAPTRELAVQISNDAEFLAKASGLKTALAYGGDGYDKQLQAIERGVDILIGTTGRVIDYVKQGVIGLDEIQVVVLDEADRMFDLGFIRDIRYLLRKCPAPQARLTMLFSATLSYKVRELAFEDMNEPEYIEIEPEQKTGHRIKEELFYPSNQDKMALLLTLMEDEWPERCIVFANTKHRCEEIWGYLAADGHRVGLLTGDVAQKKRLSLLKQFTDGDLDILVATDVAARGLHISDVTHVFNYDLPDDREDYVHRIGRTGRAGESGVSISFACEEYAMNLPAIEEYIGHSIPVSQYETEALLELPKPYRLKRAVPPQGHTRHRSYHAK.

A Q motif motif is present at residues 9-37; sequence QRFSALPLHPIVRGALAKKGFDFCTPIQA. One can recognise a Helicase ATP-binding domain in the interval 40–218; the sequence is LPISLNGRDV…FEDMNEPEYI (179 aa). 53–60 contributes to the ATP binding site; sequence AQTGTGKT. Residues 164–167 carry the DEAD box motif; sequence DEAD. In terms of domain architecture, Helicase C-terminal spans 241 to 389; sequence DKMALLLTLM…VSQYETEALL (149 aa).

It belongs to the DEAD box helicase family. RhlB subfamily. In terms of assembly, component of the RNA degradosome, which is a multiprotein complex involved in RNA processing and mRNA degradation.

The protein resides in the cytoplasm. The catalysed reaction is ATP + H2O = ADP + phosphate + H(+). Functionally, DEAD-box RNA helicase involved in RNA degradation. Has RNA-dependent ATPase activity and unwinds double-stranded RNA. The sequence is that of ATP-dependent RNA helicase RhlB from Haemophilus influenzae (strain ATCC 51907 / DSM 11121 / KW20 / Rd).